The sequence spans 504 residues: MEEKIMTNNSPWILTSSTTTTTTILLSLLFTIFIILRRNKSSSSKMVWPTGPKTLPIIGNMNILGGTALHVVLHNLAKTYGNVMTIWIGSWRPVIVVSDIDRAWEVLVNKSSDYSARDMPEITKLATADWKTISSSDSGPFWTNLRKGLQNVALSPQNLSSQSKFQERDIIKTIQNLKEEAKMNNGIVKPLDHLKKAMVRLISRLIYGQDFDNDEYVEEMHHTIEELIRVSGYARLAEAFYYAKYLPSHKKAVREVLQANQRVQNLVRPLLSLNSPTNTYLHFLRSQNYEDEVIIFAIFEAYLLGVDSTSSTTAWALAYLIREPNVQEKLYEELKNFTNDNDRKMVKFEDLNKLQYLQAVVKETMRMKPIAPLAIPHKACRETSLMGRKVNQGTRVMVNIYALHHNQNVWKEPYKFNPERFLQKNQDGVDGKAMEQSLLPFSAGMRICAGMELGKLQFSFALANLVNAFKWSCVSDGVFPDMSDQLGFVLLMKTPLEAGIVPRM.

Residues 16–36 (SSTTTTTTILLSLLFTIFIIL) traverse the membrane as a helical segment. C448 provides a ligand contact to heme.

It belongs to the cytochrome P450 family. The cofactor is heme. In terms of tissue distribution, expressed in roots and at lower levels in stems, leaves and plantlets.

The protein resides in the endoplasmic reticulum membrane. The enzyme catalyses (S)-cheilanthifoline + reduced [NADPH--hemoprotein reductase] + O2 = (S)-stylopine + oxidized [NADPH--hemoprotein reductase] + 2 H2O + H(+). The catalysed reaction is (S)-tetrahydrocolumbamine + reduced [NADPH--hemoprotein reductase] + O2 = (S)-canadine + oxidized [NADPH--hemoprotein reductase] + 2 H2O + H(+). It carries out the reaction (S)-scoulerine + reduced [NADPH--hemoprotein reductase] + O2 = (S)-nandinine + oxidized [NADPH--hemoprotein reductase] + 2 H2O + H(+). Its function is as follows. Methylenedioxy bridge-forming cytochrome P450 involved in the biosynthesis of isoquinoline alkaloids. Converts (S)-cheilanthifoline to (S)-stylopine, (S)-scoulerine to (S)-nandinine and (S)-tetrahydrocolumbamine to (S)-canadine. Can be involved in both sanguinarine and berberine biosynthesis. Catalyzes an oxidative reaction that does not incorporate oxygen into the product. This chain is Trifunctional (S)-stylopine synthase/(S)-nandinine synthase/(S)-canadine synthase, found in Argemone mexicana (Mexican prickly poppy).